The chain runs to 757 residues: Filensin (757 aa).

A head region spans residues 1 to 39 (MYRRSYVFQTRKEQYERAEEAPRAAEPDRLAEARAAAPN). At Ser-5 the chain carries Phosphoserine. One can recognise an IF rod domain in the interval 39–319 (NLAALQGLGE…RIIENEGNRL (281 aa)). The interval 40-74 (LAALQGLGERVAAHVQRARALEQRHAVLRRQLDAF) is coil 1A. Ala-41 is subject to N-acetylalanine. A linker 1 region spans residues 75-83 (QRLDELAGP). Positions 84-183 (EDALARHVEG…RYKKNLLEIQ (100 aa)) are coil 1B. The interval 184 to 200 (TYVTILQQIIQTTPQAA) is linker 12. The interval 201-319 (AITSGMREEK…RIIENEGNRL (119 aa)) is coil 2. Residues 320 to 756 (SSAFIETPIT…KKLGEKGSSS (437 aa)) form a tail region. A phosphoserine mark is found at Ser-340 and Ser-419. Disordered regions lie at residues 406–436 (EGES…GGKI) and 493–705 (GVVV…PPRK). Gly-433 carries N-myristoyl glycine lipidation. Residues 493 to 512 (GVVVSKGDDSVPPDSGVEPS) show a composition bias toward low complexity. Ser-512 bears the Phosphoserine mark. The segment covering 528–658 (QEKEDGLKEE…KQDDQKEEGA (131 aa)) has biased composition (basic and acidic residues). The stretch at 532–545 (DGLKEEGGPPEGKG) is repeat 1. The interval 532–622 (DGLKEEGGPP…EEEGPLQKKE (91 aa)) is 7 X 14 AA tandem repeats. The stretch at 546-552 (EPPEGKG) is one 2; truncated repeat. 5 consecutive repeat copies span residues 553 to 566 (DSVK…EGKG), 567 to 580 (DGVK…EGKG), 581 to 594 (DGVK…EGKG), 595 to 608 (DGVK…EGKG), and 609 to 622 (EGLK…QKKE). 2 positions are modified to phosphothreonine: Thr-628 and Thr-674. Ser-701, Ser-754, and Ser-755 each carry phosphoserine.

Belongs to the intermediate filament family. Part of a complex required for lens intermediate filament formation composed of BFSP1, BFSP2 and CRYAA. Identified in a complex that contains VIM, EZR, AHNAK, BFSP1, BFSP2, ANK2, PLEC, PRX and spectrin. Found in a complex composed of PPL (via C-terminal linker domain), BFSP1 and BFSP2 in the retinal lens. Within the complex interacts with BFSP2. Interacts (via C-terminus) with MIP (via C-terminus) in aged lens fiber cells. Proteolytically cleaved during lens cell fiber differentiation with increased fragmentation as fiber cell age increases. Post-translationally, myristoylated at Gly-433 following proteolytic cleavage at Asp-432. In terms of processing, acetylated at Ala-41 following proteolytic cleavage at Leu-40. In terms of tissue distribution, abundantly expressed in both the inner and outer cortex of the retina, expressed at a lower level in the nucleus of the retina (at protein level). Detected in eye lens fiber cells (at protein level).

It is found in the cell membrane. The protein localises to the cytoplasm. It localises to the cytoskeleton. Its subcellular location is the cell cortex. Its function is as follows. Required for the correct formation of lens intermediate filaments as part of a complex composed of BFSP1, BFSP2 and CRYAA. Involved in altering the calcium regulation of MIP water permeability. The sequence is that of Filensin (BFSP1) from Bos taurus (Bovine).